The chain runs to 237 residues: Ras-related protein RABA3 (237 aa).

35 to 42 contributes to the GTP binding site; that stretch reads GDSAVGKT. The Effector region signature appears at 57 to 65; that stretch reads SKSTIGVEF. Residues 83-87, 141-144, and 172-173 contribute to the GTP site; these read DTAGQ, NKAD, and SA. S-geranylgeranyl cysteine attachment occurs at residues cysteine 235 and cysteine 237. Cysteine 237 is modified (cysteine methyl ester).

Belongs to the small GTPase superfamily. Rab family. Expressed in root tips.

The protein resides in the endosome membrane. Its subcellular location is the golgi apparatus. It localises to the trans-Golgi network membrane. Intracellular vesicle trafficking and protein transport. The chain is Ras-related protein RABA3 (RABA3) from Arabidopsis thaliana (Mouse-ear cress).